A 520-amino-acid polypeptide reads, in one-letter code: UvrABC system protein C (520 aa).

The region spanning 11 to 89 (EEPGCYQFKD…IKKYQPKYNI (79 aa)) is the GIY-YIG domain. Residues 195–230 (QDLIYDLRKEMETFAAAEEYEKALVIRDRIAAIENL) enclose the UVR domain.

Belongs to the UvrC family. In terms of assembly, interacts with UvrB in an incision complex.

It is found in the cytoplasm. Its function is as follows. The UvrABC repair system catalyzes the recognition and processing of DNA lesions. UvrC both incises the 5' and 3' sides of the lesion. The N-terminal half is responsible for the 3' incision and the C-terminal half is responsible for the 5' incision. In Methanospirillum hungatei JF-1 (strain ATCC 27890 / DSM 864 / NBRC 100397 / JF-1), this protein is UvrABC system protein C.